A 236-amino-acid chain; its full sequence is Eukaryotic translation initiation factor 3 subunit J (236 aa).

Positions 1 to 88 are disordered; the sequence is MADDWESAAD…EAEAQRVASL (88 aa). A compositionally biased stretch (acidic residues) spans 28–46; it reads GEDEDEDIKDSWEDEEEKK. Basic and acidic residues-rich tracts occupy residues 47–58 and 68–77; these read DEEKPTKTEAPA and AKLEQQARLE.

Belongs to the eIF-3 subunit J family. As to quaternary structure, component of the eukaryotic translation initiation factor 3 (eIF-3) complex. The eIF-3 complex interacts with pix.

It is found in the cytoplasm. Component of the eukaryotic translation initiation factor 3 (eIF-3) complex, which is involved in protein synthesis of a specialized repertoire of mRNAs and, together with other initiation factors, stimulates binding of mRNA and methionyl-tRNAi to the 40S ribosome. The eIF-3 complex specifically targets and initiates translation of a subset of mRNAs involved in cell proliferation. This chain is Eukaryotic translation initiation factor 3 subunit J, found in Drosophila erecta (Fruit fly).